The sequence spans 880 residues: Valine--tRNA ligase (880 aa).

The 'HIGH' region motif lies at 51 to 61 (PNVTGELHLGH). Residues 529–533 (KMSKT) carry the 'KMSKS' region motif. K532 contributes to the ATP binding site. Positions 815-854 (MSTMVDLEAEAKRVEAEIAELETQIERLSARLSDTQFLAK) form a coiled coil.

This sequence belongs to the class-I aminoacyl-tRNA synthetase family. ValS type 1 subfamily. In terms of assembly, monomer.

The protein resides in the cytoplasm. It carries out the reaction tRNA(Val) + L-valine + ATP = L-valyl-tRNA(Val) + AMP + diphosphate. Catalyzes the attachment of valine to tRNA(Val). As ValRS can inadvertently accommodate and process structurally similar amino acids such as threonine, to avoid such errors, it has a 'posttransfer' editing activity that hydrolyzes mischarged Thr-tRNA(Val) in a tRNA-dependent manner. The protein is Valine--tRNA ligase of Dehalococcoides mccartyi (strain ATCC BAA-2266 / KCTC 15142 / 195) (Dehalococcoides ethenogenes (strain 195)).